The chain runs to 369 residues: Peptide chain release factor 2 (369 aa).

Position 250 is an N5-methylglutamine (glutamine 250).

It belongs to the prokaryotic/mitochondrial release factor family. In terms of processing, methylated by PrmC. Methylation increases the termination efficiency of RF2.

It is found in the cytoplasm. Peptide chain release factor 2 directs the termination of translation in response to the peptide chain termination codons UGA and UAA. The polypeptide is Peptide chain release factor 2 (prfB) (Rickettsia prowazekii (strain Madrid E)).